We begin with the raw amino-acid sequence, 138 residues long: Acidic phospholipase A2 1 (138 aa).

The first 16 residues, 1–16 (MRTLWIMAVLLVGVEG), serve as a signal peptide directing secretion. 7 disulfides stabilise this stretch: cysteine 42/cysteine 131, cysteine 44/cysteine 60, cysteine 59/cysteine 111, cysteine 65/cysteine 138, cysteine 66/cysteine 104, cysteine 73/cysteine 97, and cysteine 91/cysteine 102. The Ca(2+) site is built by phenylalanine 43, glycine 45, and glycine 47. Residue histidine 63 is part of the active site. Aspartate 64 provides a ligand contact to Ca(2+). Aspartate 105 is a catalytic residue.

Belongs to the phospholipase A2 family. Group II subfamily. D49 sub-subfamily. It depends on Ca(2+) as a cofactor. As to expression, expressed by the venom gland.

Its subcellular location is the secreted. It carries out the reaction a 1,2-diacyl-sn-glycero-3-phosphocholine + H2O = a 1-acyl-sn-glycero-3-phosphocholine + a fatty acid + H(+). Its function is as follows. Snake venom phospholipase A2 (PLA2) that has high lipolytic activity. PLA2 catalyzes the calcium-dependent hydrolysis of the 2-acyl groups in 3-sn-phosphoglycerides. This chain is Acidic phospholipase A2 1, found in Craspedocephalus gramineus (Bamboo pit viper).